The chain runs to 101 residues: Translation initiation factor IF-1, chloroplastic (101 aa).

Residues 1-10 show a composition bias toward polar residues; it reads MNQLKKSFSP. Positions 1–35 are disordered; it reads MNQLKKSFSPTEGKKDQNNLINDPQKNKQKKQKKL. Positions 26-101 constitute an S1-like domain; that stretch reads KNKQKKQKKL…TKGRITYRHR (76 aa).

The protein belongs to the IF-1 family. In terms of assembly, component of the 30S ribosomal translation pre-initiation complex which assembles on the 30S ribosome in the order IF-2 and IF-3, IF-1 and N-formylmethionyl-tRNA(fMet); mRNA recruitment can occur at any time during PIC assembly.

The protein localises to the plastid. It is found in the chloroplast. In terms of biological role, one of the essential components for the initiation of protein synthesis. Stabilizes the binding of IF-2 and IF-3 on the 30S subunit to which N-formylmethionyl-tRNA(fMet) subsequently binds. Helps modulate mRNA selection, yielding the 30S pre-initiation complex (PIC). Upon addition of the 50S ribosomal subunit IF-1, IF-2 and IF-3 are released leaving the mature 70S translation initiation complex. In Tetradesmus obliquus (Green alga), this protein is Translation initiation factor IF-1, chloroplastic.